The following is a 485-amino-acid chain: Glutamyl-tRNA(Gln) amidotransferase subunit A (485 aa).

Catalysis depends on charge relay system residues Lys78 and Ser153. Ser177 functions as the Acyl-ester intermediate in the catalytic mechanism.

Belongs to the amidase family. GatA subfamily. As to quaternary structure, heterotrimer of A, B and C subunits.

It carries out the reaction L-glutamyl-tRNA(Gln) + L-glutamine + ATP + H2O = L-glutaminyl-tRNA(Gln) + L-glutamate + ADP + phosphate + H(+). Functionally, allows the formation of correctly charged Gln-tRNA(Gln) through the transamidation of misacylated Glu-tRNA(Gln) in organisms which lack glutaminyl-tRNA synthetase. The reaction takes place in the presence of glutamine and ATP through an activated gamma-phospho-Glu-tRNA(Gln). This is Glutamyl-tRNA(Gln) amidotransferase subunit A from Geotalea daltonii (strain DSM 22248 / JCM 15807 / FRC-32) (Geobacter daltonii).